An 802-amino-acid polypeptide reads, in one-letter code: Lon protease (802 aa).

The Lon N-terminal domain maps to 17–209 (LPILPLNNVV…QVLSFLERER (193 aa)). 363–370 (GPPGVGKT) provides a ligand contact to ATP. Residues 599–780 (EDEVGVVTGL…DEVLPRVLHP (182 aa)) enclose the Lon proteolytic domain. Active-site residues include S686 and K729.

It belongs to the peptidase S16 family. As to quaternary structure, homohexamer. Organized in a ring with a central cavity.

Its subcellular location is the cytoplasm. The catalysed reaction is Hydrolysis of proteins in presence of ATP.. Its function is as follows. ATP-dependent serine protease that mediates the selective degradation of mutant and abnormal proteins as well as certain short-lived regulatory proteins. Required for cellular homeostasis and for survival from DNA damage and developmental changes induced by stress. Degrades polypeptides processively to yield small peptide fragments that are 5 to 10 amino acids long. Binds to DNA in a double-stranded, site-specific manner. In Roseiflexus castenholzii (strain DSM 13941 / HLO8), this protein is Lon protease.